A 380-amino-acid polypeptide reads, in one-letter code: Cytochrome b (380 aa).

Helical transmembrane passes span 34-54, 78-99, 114-134, and 179-199; these read FGSL…LLAT, WLIR…YLHI, WNTG…GYVL, and FFAL…IHLT. Residues His-84 and His-98 each coordinate heme b. 2 residues coordinate heme b: His-183 and His-197. Position 202 (His-202) interacts with a ubiquinone. A run of 4 helical transmembrane segments spans residues 227–247, 289–309, 321–341, and 348–368; these read LKDI…ALFS, LGGV…PLLH, LSQL…WVGS, and FIII…LLFP.

The protein belongs to the cytochrome b family. In terms of assembly, the cytochrome bc1 complex contains 11 subunits: 3 respiratory subunits (MT-CYB, CYC1 and UQCRFS1), 2 core proteins (UQCRC1 and UQCRC2) and 6 low-molecular weight proteins (UQCRH/QCR6, UQCRB/QCR7, UQCRQ/QCR8, UQCR10/QCR9, UQCR11/QCR10 and a cleavage product of UQCRFS1). This cytochrome bc1 complex then forms a dimer. Heme b is required as a cofactor.

The protein resides in the mitochondrion inner membrane. Functionally, component of the ubiquinol-cytochrome c reductase complex (complex III or cytochrome b-c1 complex) that is part of the mitochondrial respiratory chain. The b-c1 complex mediates electron transfer from ubiquinol to cytochrome c. Contributes to the generation of a proton gradient across the mitochondrial membrane that is then used for ATP synthesis. In Cepphus grylle (Black guillemot), this protein is Cytochrome b (MT-CYB).